Consider the following 607-residue polypeptide: MCGIIGILGKKCVASSLIAGLKRLEYRGYDSSGIATVHNGRLYRVRAEGKLVHLEEKLKKTPLKGSLGIGHTRWATHGVAVERNAHPHVTERLAIVHNGIIENFVELQKELIEEGYTFETETDTEVIAHLITRALKSGLSQQEAIRTSWKRLQGAFAIVVIFEGQDNLMIAARSGPPLAIGYGQDEFFVGSDAVALASFVDRISYMEDGDWAVLTREGVTIYGADNQPVKRPITTLFEGTLLVSKGNHRHFMHKEMFEQPEVISHNLAHYLDLGNYTVRSLKNLIDWKKINRILFASCGTAYYSTLVARYWFENFAALSVDNDIASEFRYREPPITSDVLSVFVSQSGETADTLACLRYCREHGVKTATIVNVEQSTMAREADFILPTRAGPEIGVASTKAFTCQLATLAAMALDAAKQRGSLSEKAEHQFVQQLAEVPRILNEVLKLDDKIEQICRDLVNVRGVLYLGRGTSYPIALEGALKLKELSYIHAEGYAAGELKHGPIALVDEAIPVIVVAPYDRWFEKTFSNMQEVAARNGRIILITDKRGAEVAGLDTLSTIVLPNIPEFIAPIIYALPIQLIAYHTAVLLGTDVDQPRNLAKSVTVE.

Cysteine 2 acts as the Nucleophile; for GATase activity in catalysis. In terms of domain architecture, Glutamine amidotransferase type-2 spans 2 to 217 (CGIIGILGKK…DGDWAVLTRE (216 aa)). SIS domains follow at residues 277–422 (TVRS…QRGS) and 455–597 (ICRD…VDQP). Catalysis depends on lysine 602, which acts as the For Fru-6P isomerization activity.

Homodimer.

It localises to the cytoplasm. The enzyme catalyses D-fructose 6-phosphate + L-glutamine = D-glucosamine 6-phosphate + L-glutamate. Its function is as follows. Catalyzes the first step in hexosamine metabolism, converting fructose-6P into glucosamine-6P using glutamine as a nitrogen source. This is Glutamine--fructose-6-phosphate aminotransferase [isomerizing] from Bartonella quintana (strain Toulouse) (Rochalimaea quintana).